A 95-amino-acid polypeptide reads, in one-letter code: ESAT-6-like protein EsxA (95 aa).

Belongs to the WXG100 family. ESAT-6 subfamily. As to quaternary structure, forms a tight 1:1 complex with EsxB.

In Corynebacterium diphtheriae (strain ATCC 700971 / NCTC 13129 / Biotype gravis), this protein is ESAT-6-like protein EsxA.